The following is a 223-amino-acid chain: Phosphoribosylformylglycinamidine synthase subunit PurQ (223 aa).

A Glutamine amidotransferase type-1 domain is found at 3 to 223 (FAVLVFPGSN…MVKSWREQHV (221 aa)). The Nucleophile role is filled by cysteine 85. Active-site residues include histidine 193 and glutamate 195.

As to quaternary structure, part of the FGAM synthase complex composed of 1 PurL, 1 PurQ and 2 PurS subunits.

Its subcellular location is the cytoplasm. The enzyme catalyses N(2)-formyl-N(1)-(5-phospho-beta-D-ribosyl)glycinamide + L-glutamine + ATP + H2O = 2-formamido-N(1)-(5-O-phospho-beta-D-ribosyl)acetamidine + L-glutamate + ADP + phosphate + H(+). It carries out the reaction L-glutamine + H2O = L-glutamate + NH4(+). It participates in purine metabolism; IMP biosynthesis via de novo pathway; 5-amino-1-(5-phospho-D-ribosyl)imidazole from N(2)-formyl-N(1)-(5-phospho-D-ribosyl)glycinamide: step 1/2. In terms of biological role, part of the phosphoribosylformylglycinamidine synthase complex involved in the purines biosynthetic pathway. Catalyzes the ATP-dependent conversion of formylglycinamide ribonucleotide (FGAR) and glutamine to yield formylglycinamidine ribonucleotide (FGAM) and glutamate. The FGAM synthase complex is composed of three subunits. PurQ produces an ammonia molecule by converting glutamine to glutamate. PurL transfers the ammonia molecule to FGAR to form FGAM in an ATP-dependent manner. PurS interacts with PurQ and PurL and is thought to assist in the transfer of the ammonia molecule from PurQ to PurL. The sequence is that of Phosphoribosylformylglycinamidine synthase subunit PurQ from Staphylococcus aureus (strain bovine RF122 / ET3-1).